The sequence spans 440 residues: Homocitrate synthase, mitochondrial (440 aa).

Positions M1–Y23 are enriched in polar residues. Residues M1–P27 are disordered. Residues F37–R290 enclose the Pyruvate carboxyltransferase domain. A 2-oxoglutarate-binding site is contributed by R45. E46 lines the Mg(2+) pocket. Residues H105, R165, and T199 each coordinate 2-oxoglutarate. Positions 226 and 228 each coordinate Mg(2+). The Proton acceptor role is filled by H323. Residue S399 is modified to Phosphoserine. At T410 the chain carries Phosphothreonine.

This sequence belongs to the alpha-IPM synthase/homocitrate synthase family. Homocitrate synthase LYS20/LYS21 subfamily. Requires Mg(2+) as cofactor. Mn(2+) serves as cofactor.

The protein resides in the mitochondrion. The enzyme catalyses acetyl-CoA + 2-oxoglutarate + H2O = (2R)-homocitrate + CoA + H(+). It participates in amino-acid biosynthesis; L-lysine biosynthesis via AAA pathway; L-alpha-aminoadipate from 2-oxoglutarate: step 1/5. In terms of biological role, catalyzes the aldol-type condensation of 2-oxoglutarate with acetyl-CoA to yield homocitrate. Carries out the first step of the alpha-aminoadipate (AAA) lysine biosynthesis pathway. The sequence is that of Homocitrate synthase, mitochondrial (LYS21) from Saccharomyces cerevisiae (strain ATCC 204508 / S288c) (Baker's yeast).